Consider the following 102-residue polypeptide: Small ribosomal subunit protein uS10 (102 aa).

It belongs to the universal ribosomal protein uS10 family. Part of the 30S ribosomal subunit.

Its function is as follows. Involved in the binding of tRNA to the ribosomes. This chain is Small ribosomal subunit protein uS10, found in Oceanobacillus iheyensis (strain DSM 14371 / CIP 107618 / JCM 11309 / KCTC 3954 / HTE831).